A 133-amino-acid polypeptide reads, in one-letter code: Putative nickel-responsive regulator (133 aa).

Residues H74, H85, H87, and C93 each contribute to the Ni(2+) site.

It belongs to the transcriptional regulatory CopG/NikR family. It depends on Ni(2+) as a cofactor.

Transcriptional regulator. This Saccharolobus islandicus (strain Y.N.15.51 / Yellowstone #2) (Sulfolobus islandicus) protein is Putative nickel-responsive regulator.